The primary structure comprises 232 residues: 7-cyano-7-deazaguanine synthase (232 aa).

8 to 18 (LSGGLDSATVL) contributes to the ATP binding site. Positions 188, 198, 201, and 204 each coordinate Zn(2+).

Belongs to the QueC family. Zn(2+) serves as cofactor.

The enzyme catalyses 7-carboxy-7-deazaguanine + NH4(+) + ATP = 7-cyano-7-deazaguanine + ADP + phosphate + H2O + H(+). It functions in the pathway purine metabolism; 7-cyano-7-deazaguanine biosynthesis. Its function is as follows. Catalyzes the ATP-dependent conversion of 7-carboxy-7-deazaguanine (CDG) to 7-cyano-7-deazaguanine (preQ(0)). The chain is 7-cyano-7-deazaguanine synthase from Nitrosospira multiformis (strain ATCC 25196 / NCIMB 11849 / C 71).